A 244-amino-acid chain; its full sequence is Transmembrane protein 176A (244 aa).

Position 42 is a phosphoserine (Ser-42). 4 helical membrane-spanning segments follow: residues 60 to 80 (VLVA…VLGG), 92 to 112 (SEGA…VAFL), 122 to 142 (ALMR…AIVI), and 204 to 224 (LLGI…VYIW).

Belongs to the TMEM176 family. As to quaternary structure, interacts with MCOLN2. In terms of tissue distribution, specifically expressed in lung, kidney and spleen.

It localises to the membrane. This is Transmembrane protein 176A (Tmem176a) from Mus musculus (Mouse).